Consider the following 331-residue polypeptide: DNA-directed RNA polymerase subunit alpha (331 aa).

An alpha N-terminal domain (alpha-NTD) region spans residues 1–237 (MQSFEKEFLK…DQLSSFIDLK (237 aa)). Positions 251-331 (FDPSLLNLVD…NWPPKHLSEQ (81 aa)) are alpha C-terminal domain (alpha-CTD).

This sequence belongs to the RNA polymerase alpha chain family. In terms of assembly, homodimer. The RNAP catalytic core consists of 2 alpha, 1 beta, 1 beta' and 1 omega subunit. When a sigma factor is associated with the core the holoenzyme is formed, which can initiate transcription.

The catalysed reaction is RNA(n) + a ribonucleoside 5'-triphosphate = RNA(n+1) + diphosphate. DNA-dependent RNA polymerase catalyzes the transcription of DNA into RNA using the four ribonucleoside triphosphates as substrates. The sequence is that of DNA-directed RNA polymerase subunit alpha from Blochmanniella floridana.